A 105-amino-acid chain; its full sequence is Protein FAM24A (105 aa).

The first 32 residues, 1–32 (MAKMFDLRTKIMIGIGSSLLVAAMVLLSVVFC), serve as a signal peptide directing secretion.

This sequence belongs to the FAM24 family.

Its subcellular location is the secreted. This is Protein FAM24A (FAM24A) from Homo sapiens (Human).